A 289-amino-acid chain; its full sequence is NAD kinase (289 aa).

Asp-68 serves as the catalytic Proton acceptor. NAD(+)-binding positions include 68 to 69 (DG), Lys-73, 142 to 143 (ND), Arg-153, Asp-172, 183 to 188 (TAYSLS), and Gln-243.

The protein belongs to the NAD kinase family. The cofactor is a divalent metal cation.

It is found in the cytoplasm. The catalysed reaction is NAD(+) + ATP = ADP + NADP(+) + H(+). Involved in the regulation of the intracellular balance of NAD and NADP, and is a key enzyme in the biosynthesis of NADP. Catalyzes specifically the phosphorylation on 2'-hydroxyl of the adenosine moiety of NAD to yield NADP. The sequence is that of NAD kinase from Acetivibrio thermocellus (strain ATCC 27405 / DSM 1237 / JCM 9322 / NBRC 103400 / NCIMB 10682 / NRRL B-4536 / VPI 7372) (Clostridium thermocellum).